We begin with the raw amino-acid sequence, 118 residues long: Small ribosomal subunit protein uS13 (118 aa).

Positions 94-118 are disordered; it reads SLPVRGQRTKTNARTRKGPRRPIKR.

The protein belongs to the universal ribosomal protein uS13 family. As to quaternary structure, part of the 30S ribosomal subunit. Forms a loose heterodimer with protein S19. Forms two bridges to the 50S subunit in the 70S ribosome.

Located at the top of the head of the 30S subunit, it contacts several helices of the 16S rRNA. In the 70S ribosome it contacts the 23S rRNA (bridge B1a) and protein L5 of the 50S subunit (bridge B1b), connecting the 2 subunits; these bridges are implicated in subunit movement. Contacts the tRNAs in the A and P-sites. In Dichelobacter nodosus (strain VCS1703A), this protein is Small ribosomal subunit protein uS13.